The sequence spans 149 residues: Large ribosomal subunit protein uL11 (149 aa).

The protein belongs to the universal ribosomal protein uL11 family. Part of the ribosomal stalk of the 50S ribosomal subunit. Interacts with L10 and the large rRNA to form the base of the stalk. L10 forms an elongated spine to which L12 dimers bind in a sequential fashion forming a multimeric L10(L12)X complex. Post-translationally, one or more lysine residues are methylated.

Its function is as follows. Forms part of the ribosomal stalk which helps the ribosome interact with GTP-bound translation factors. The polypeptide is Large ribosomal subunit protein uL11 (Methylobacterium radiotolerans (strain ATCC 27329 / DSM 1819 / JCM 2831 / NBRC 15690 / NCIMB 10815 / 0-1)).